A 260-amino-acid polypeptide reads, in one-letter code: MNRWAVPILHEHKHYYIVNKVHGIVCQPPDLRTWYKYHDYEPPVLLDLLRKQHPNFGGEVWRTVHRLDEPVTGGVLVSRNKRAAAMFSRSLALGGNRGFPLTRRYVALLAREAKGLPSEGRITMGDMITDYKRLENDLVLLQLQTGRKHQIRKQMAQVFGQPVVNDKMYGGDSVDGIVDNLIGLHSAFIGAQCGLQARTYLIPIPRTQDAFKLWDKYIDEQGGFIPSVQKELRDFSLPSKLENTITLLSGGQGGIQISYK.

Aspartate 68 is a catalytic residue.

It belongs to the pseudouridine synthase RluA family.

It is found in the mitochondrion. The catalysed reaction is uridine(2819) in 21S rRNA = pseudouridine(2819) in 21S rRNA. Its function is as follows. Pseudouridylate synthase responsible for the pseudouridine-2819 formation in mitochondrial 21S rRNA. May modulate the efficiency or the fidelity of the mitochondrial translation machinery. The chain is 21S rRNA pseudouridine(2819) synthase (PUS5) from Eremothecium gossypii (strain ATCC 10895 / CBS 109.51 / FGSC 9923 / NRRL Y-1056) (Yeast).